Consider the following 736-residue polypeptide: 1,4-alpha-glucan branching enzyme GlgB (736 aa).

The active-site Nucleophile is the Asp415. The active-site Proton donor is Glu470.

The protein belongs to the glycosyl hydrolase 13 family. GlgB subfamily. In terms of assembly, monomer.

It carries out the reaction Transfers a segment of a (1-&gt;4)-alpha-D-glucan chain to a primary hydroxy group in a similar glucan chain.. The protein operates within glycan biosynthesis; glycogen biosynthesis. In terms of biological role, catalyzes the formation of the alpha-1,6-glucosidic linkages in glycogen by scission of a 1,4-alpha-linked oligosaccharide from growing alpha-1,4-glucan chains and the subsequent attachment of the oligosaccharide to the alpha-1,6 position. The sequence is that of 1,4-alpha-glucan branching enzyme GlgB from Paraburkholderia xenovorans (strain LB400).